The primary structure comprises 562 residues: Zinc finger protein 579 (562 aa).

The span at 1–11 (MDPQPPPPAQG) shows a compositional bias: pro residues. The tract at residues 1–43 (MDPQPPPPAQGSPPHRGRGRGRGRGRGRGRGRGRGGAGAPRAP) is disordered. A compositionally biased stretch (basic residues) spans 15–33 (HRGRGRGRGRGRGRGRGRG). 3 C2H2-type zinc fingers span residues 44-66 (LPCP…RLSH), 72-94 (HACP…LRGH), and 100-123 (LRCA…AQEH). An Omega-N-methylarginine modification is found at R92. The segment at 139 to 203 (TAEPSWGPQD…SESEEAEAGA (65 aa)) is disordered. A phosphoserine mark is found at S194 and S196. C2H2-type zinc fingers lie at residues 270–292 (HQCS…RLVH) and 298–320 (FVCP…RRVH). Residues 327 to 379 (APLPAAGKKDDKASGARNSAKGPEGGEGAECGGASEGGEGQNGGDAAPARPPA) are disordered. Positions 349–369 (PEGGEGAECGGASEGGEGQNG) are enriched in gly residues. 3 C2H2-type zinc fingers span residues 384–406 (FWCP…GVTH), 412–434 (FQCV…AQVH), and 441–463 (HPCP…QRCH). The interval 477-562 (QAQAPTSPPP…HLRGLGGLAS (86 aa)) is disordered. Composition is skewed to pro residues over residues 482–491 (TSPPPPPPPL) and 512–525 (PSPG…PAPP). Position 483 is a phosphoserine (S483).

The protein belongs to the krueppel C2H2-type zinc-finger protein family.

It localises to the nucleus. Its function is as follows. May be involved in transcriptional regulation. The polypeptide is Zinc finger protein 579 (ZNF579) (Homo sapiens (Human)).